Consider the following 185-residue polypeptide: Ribosome-recycling factor (185 aa).

This sequence belongs to the RRF family.

The protein localises to the cytoplasm. Its function is as follows. Responsible for the release of ribosomes from messenger RNA at the termination of protein biosynthesis. May increase the efficiency of translation by recycling ribosomes from one round of translation to another. The protein is Ribosome-recycling factor of Corynebacterium urealyticum (strain ATCC 43042 / DSM 7109).